A 343-amino-acid polypeptide reads, in one-letter code: Cytoplasmic tRNA 2-thiolation protein 1 (343 aa).

Belongs to the TtcA family. CTU1/NCS6/ATPBD3 subfamily.

The protein localises to the cytoplasm. The protein operates within tRNA modification; 5-methoxycarbonylmethyl-2-thiouridine-tRNA biosynthesis. In terms of biological role, plays a central role in 2-thiolation of mcm(5)S(2)U at tRNA wobble positions of tRNA(Lys), tRNA(Glu) and tRNA(Gln). Directly binds tRNAs and probably acts by catalyzing adenylation of tRNAs, an intermediate required for 2-thiolation. It is unclear whether it acts as a sulfurtransferase that transfers sulfur from thiocarboxylated URM1 onto the uridine of tRNAs at wobble position. The chain is Cytoplasmic tRNA 2-thiolation protein 1 from Drosophila melanogaster (Fruit fly).